Here is a 38-residue protein sequence, read N- to C-terminus: Large ribosomal subunit protein bL36 (38 aa).

It belongs to the bacterial ribosomal protein bL36 family.

The polypeptide is Large ribosomal subunit protein bL36 (Synechocystis sp. (strain ATCC 27184 / PCC 6803 / Kazusa)).